Here is a 438-residue protein sequence, read N- to C-terminus: Xylose isomerase (438 aa).

Mg(2+) contacts are provided by Asp306 and Asp308.

Belongs to the xylose isomerase family. As to quaternary structure, homotetramer. It depends on Mg(2+) as a cofactor.

The protein resides in the cytoplasm. It carries out the reaction alpha-D-xylose = alpha-D-xylulofuranose. This is Xylose isomerase from Pseudomonas fluorescens (strain SBW25).